Here is a 416-residue protein sequence, read N- to C-terminus: Thyroid hormone receptor alpha (416 aa).

A compositionally biased stretch (polar residues) spans 1 to 13 (MEPMSNKQDSNSS). The segment at 1-37 (MEPMSNKQDSNSSEGDEKGWPDVPKRKRKNSQCSMKS) is disordered. A modulating region spans residues 1–58 (MEPMSNKQDSNSSEGDEKGWPDVPKRKRKNSQCSMKSMSALSVSVPGYIPSYLEKDEP). Over residues 15–24 (GDEKGWPDVP) the composition is skewed to basic and acidic residues. 8 residues coordinate Zn(2+): C59, C62, C76, C79, C97, C103, C113, and C116. 2 NR C4-type zinc fingers span residues 59-79 (CVVC…CEGC) and 97-121 (CKYE…FKKC). Residues 59-133 (CVVCGDKATG…VGMAMDLVLD (75 aa)) constitute a DNA-binding region (nuclear receptor). An NR LBD domain is found at 169–413 (AEWELIRMAT…PPLFLEVFED (245 aa)). Residue R234 coordinates 3,3',5-triiodo-L-thyronine.

This sequence belongs to the nuclear hormone receptor family. NR1 subfamily.

The protein localises to the nucleus. In terms of biological role, nuclear hormone receptor that can act as a repressor or activator of transcription. High affinity receptor for thyroid hormones, including triiodothyronine and thyroxine. The polypeptide is Thyroid hormone receptor alpha (thra) (Hippoglossus hippoglossus (Atlantic halibut)).